A 508-amino-acid chain; its full sequence is UDP-N-acetylmuramoylalanine--D-glutamate ligase (508 aa).

138 to 144 (GTNGKTT) lines the ATP pocket. Positions 294–314 (FDEPAPRRKKDAPPPTRAGGR) are disordered.

This sequence belongs to the MurCDEF family.

Its subcellular location is the cytoplasm. It carries out the reaction UDP-N-acetyl-alpha-D-muramoyl-L-alanine + D-glutamate + ATP = UDP-N-acetyl-alpha-D-muramoyl-L-alanyl-D-glutamate + ADP + phosphate + H(+). Its pathway is cell wall biogenesis; peptidoglycan biosynthesis. In terms of biological role, cell wall formation. Catalyzes the addition of glutamate to the nucleotide precursor UDP-N-acetylmuramoyl-L-alanine (UMA). The polypeptide is UDP-N-acetylmuramoylalanine--D-glutamate ligase (Bordetella parapertussis (strain 12822 / ATCC BAA-587 / NCTC 13253)).